The primary structure comprises 48 residues: Large ribosomal subunit protein bL33A (48 aa).

This sequence belongs to the bacterial ribosomal protein bL33 family.

In Streptococcus pyogenes serotype M28 (strain MGAS6180), this protein is Large ribosomal subunit protein bL33A.